The sequence spans 596 residues: RNA-binding protein involved in heterochromatin assembly dri1 (596 aa).

Ser-176 carries the post-translational modification Phosphoserine. The RRM domain maps to 236 to 314 (KIVHVAGLTN…RMLEIIPSST (79 aa)). The RanBP2-type 1 zinc finger occupies 335–364 (RPGDWNCPMCGFSNFQRRTSCFRCSFPGPT). A Phosphoserine modification is found at Ser-429. RanBP2-type zinc fingers lie at residues 437 to 468 (RAGD…SRAT) and 552 to 580 (DQGD…PHYS).

Interacts with dpb4. Interacts with chp1.

It is found in the chromosome. The protein resides in the nucleus. The protein localises to the cytoplasm. Its subcellular location is the cytoplasmic granule. Mediates heterochromatin assembly by promoting RNAi-mediated heterochromatin silencing and histone deacetylation. Binds pericetromeric transcripts and recruits the RNA-induced transcriptional silencing (RITS) complex to heterochromatin. Recruits sir2 to chromatin to promote deacetylation of 'Lys-9' of histone H3. Involved in bipolar spindle assembly during mitosis. Required for proper localization of kinesin-14/Klp2 on the spindle microtubules. The chain is RNA-binding protein involved in heterochromatin assembly dri1 from Schizosaccharomyces pombe (strain 972 / ATCC 24843) (Fission yeast).